A 424-amino-acid chain; its full sequence is CinA-like protein (424 aa).

This sequence belongs to the CinA family.

This chain is CinA-like protein, found in Prochlorococcus marinus (strain AS9601).